The sequence spans 450 residues: mRNA cleavage and polyadenylation factor CLP1 (450 aa).

Residues E29, K67, and 137-142 (NSGKTS) contribute to the ATP site.

This sequence belongs to the Clp1 family. Clp1 subfamily. Component of a pre-mRNA cleavage factor complex. Interacts directly with PCF11.

The protein localises to the nucleus. Functionally, required for endonucleolytic cleavage during polyadenylation-dependent pre-mRNA 3'-end formation. The chain is mRNA cleavage and polyadenylation factor CLP1 from Yarrowia lipolytica (strain CLIB 122 / E 150) (Yeast).